We begin with the raw amino-acid sequence, 153 residues long: 6,7-dimethyl-8-ribityllumazine synthase (153 aa).

5-amino-6-(D-ribitylamino)uracil is bound by residues Phe21, 55 to 57, and 79 to 81; these read AFE and TVI. 84–85 is a binding site for (2S)-2-hydroxy-3-oxobutyl phosphate; that stretch reads AT. His87 acts as the Proton donor in catalysis. A 5-amino-6-(D-ribitylamino)uracil-binding site is contributed by Phe112. Arg126 contributes to the (2S)-2-hydroxy-3-oxobutyl phosphate binding site.

Belongs to the DMRL synthase family. In terms of assembly, forms an icosahedral capsid composed of 60 subunits, arranged as a dodecamer of pentamers.

The catalysed reaction is (2S)-2-hydroxy-3-oxobutyl phosphate + 5-amino-6-(D-ribitylamino)uracil = 6,7-dimethyl-8-(1-D-ribityl)lumazine + phosphate + 2 H2O + H(+). The protein operates within cofactor biosynthesis; riboflavin biosynthesis; riboflavin from 2-hydroxy-3-oxobutyl phosphate and 5-amino-6-(D-ribitylamino)uracil: step 1/2. Its function is as follows. Catalyzes the formation of 6,7-dimethyl-8-ribityllumazine by condensation of 5-amino-6-(D-ribitylamino)uracil with 3,4-dihydroxy-2-butanone 4-phosphate. This is the penultimate step in the biosynthesis of riboflavin. The polypeptide is 6,7-dimethyl-8-ribityllumazine synthase (Bacillus cereus (strain 03BB102)).